A 63-amino-acid polypeptide reads, in one-letter code: Large ribosomal subunit protein uL29 (63 aa).

This sequence belongs to the universal ribosomal protein uL29 family.

The sequence is that of Large ribosomal subunit protein uL29 from Photorhabdus laumondii subsp. laumondii (strain DSM 15139 / CIP 105565 / TT01) (Photorhabdus luminescens subsp. laumondii).